We begin with the raw amino-acid sequence, 135 residues long: Hemoglobin subunit beta-3 (135 aa).

Residues H2 to Q135 enclose the Globin domain. Heme b contacts are provided by H57 and H81.

The protein belongs to the globin family. As to quaternary structure, hb 3 is a heterotetramer of two alpha and two beta-3 chains. As to expression, red blood cells (at protein level).

Involved in oxygen transport from gills to the various peripheral tissues. The polypeptide is Hemoglobin subunit beta-3 (Somniosus microcephalus (Greenland sleeper shark)).